The sequence spans 490 residues: MVPVVALVGRPNVGKSTLFNRLTRTRDALVADFPGLTRDRKYGRAEIEGREFICIDTGGIDGTEDGVETRMAEQSLLAIEEADVVLFMVDARAGLMPADEAIAKHLRSREKPTFLVANKIDGLDPDQAVVDFYSLGLGEIYPIAASHGRGVLSLLEHVLLPWMEDLAPQEEVDEDAEYWAQFEAEENGEEEEEDDFDPQSLPIKLAIVGRPNVGKSTLTNRILGEERVVVYDMPGTTRDSIYIPMERDGREYVLIDTAGVRKRGKITDAVEKFSVIKTLQAIEDANVVMLVIDAREGISDQDLSLLGFILNSGRSLVIVVNKWDGLSQEVKEQVKETLDFRLGFIDFARVHFISALHGSGVGNLFESVREAYDSSTRRVGTSMLTRIMTMAVEDHQPPLVRGRRVKLKYAHAGGYNPPIVVIHGNQVKDLPDSYKRYLMNYFRKSLDVMGSPIRIQFKEGENPYANKRNTLTPTQMRKRKRLMKHIKKNK.

2 EngA-type G domains span residues 3–166 (PVVA…MEDL) and 203–376 (IKLA…DSST). GTP is bound by residues 9–16 (GRPNVGKS), 56–60 (DTGGI), 118–121 (NKID), 209–216 (GRPNVGKS), 256–260 (DTAGV), and 321–324 (NKWD). Residues 377–461 (RRVGTSMLTR…PIRIQFKEGE (85 aa)) enclose the KH-like domain.

It belongs to the TRAFAC class TrmE-Era-EngA-EngB-Septin-like GTPase superfamily. EngA (Der) GTPase family. As to quaternary structure, associates with the 50S ribosomal subunit.

GTPase that plays an essential role in the late steps of ribosome biogenesis. The chain is GTPase Der from Shigella boydii serotype 18 (strain CDC 3083-94 / BS512).